The primary structure comprises 397 residues: Cytoplasmic tRNA 2-thiolation protein 2 (397 aa).

The protein belongs to the CTU2/NCS2 family.

The protein resides in the cytoplasm. Its pathway is tRNA modification; 5-methoxycarbonylmethyl-2-thiouridine-tRNA biosynthesis. Its function is as follows. Plays a central role in 2-thiolation of mcm(5)S(2)U at tRNA wobble positions of tRNA(Lys), tRNA(Glu) and tRNA(Gln). May act by forming a heterodimer with NCS6/CTU1 that ligates sulfur from thiocarboxylated URM1 onto the uridine of tRNAs at wobble position. This chain is Cytoplasmic tRNA 2-thiolation protein 2, found in Drosophila grimshawi (Hawaiian fruit fly).